The chain runs to 227 residues: ATP-dependent dethiobiotin synthetase BioD (227 aa).

13 to 18 (DIGKTY) provides a ligand contact to ATP. Threonine 17 is a Mg(2+) binding site. Lysine 38 is an active-site residue. A substrate-binding site is contributed by serine 42. Residues aspartate 55, 116 to 119 (EGSG), and 179 to 180 (NN) contribute to the ATP site. 2 residues coordinate Mg(2+): aspartate 55 and glutamate 116.

The protein belongs to the dethiobiotin synthetase family. In terms of assembly, homodimer. Mg(2+) serves as cofactor.

It localises to the cytoplasm. It carries out the reaction (7R,8S)-7,8-diammoniononanoate + CO2 + ATP = (4R,5S)-dethiobiotin + ADP + phosphate + 3 H(+). The protein operates within cofactor biosynthesis; biotin biosynthesis; biotin from 7,8-diaminononanoate: step 1/2. Functionally, catalyzes a mechanistically unusual reaction, the ATP-dependent insertion of CO2 between the N7 and N8 nitrogen atoms of 7,8-diaminopelargonic acid (DAPA, also called 7,8-diammoniononanoate) to form a ureido ring. This is ATP-dependent dethiobiotin synthetase BioD from Clostridium botulinum (strain Alaska E43 / Type E3).